A 350-amino-acid polypeptide reads, in one-letter code: Probable dual-specificity RNA methyltransferase RlmN (350 aa).

The Proton acceptor role is filled by Glu93. A Radical SAM core domain is found at 99–327 (SSKRLTVCVS…VSVRYSRGVQ (229 aa)). Cys106 and Cys332 are joined by a disulfide. Positions 113, 117, and 120 each coordinate [4Fe-4S] cluster. Residues 160–161 (GE), Ser190, 213–215 (SLH), and Asn289 contribute to the S-adenosyl-L-methionine site. Cys332 acts as the S-methylcysteine intermediate in catalysis.

Belongs to the radical SAM superfamily. RlmN family. Requires [4Fe-4S] cluster as cofactor.

It localises to the cytoplasm. It carries out the reaction adenosine(2503) in 23S rRNA + 2 reduced [2Fe-2S]-[ferredoxin] + 2 S-adenosyl-L-methionine = 2-methyladenosine(2503) in 23S rRNA + 5'-deoxyadenosine + L-methionine + 2 oxidized [2Fe-2S]-[ferredoxin] + S-adenosyl-L-homocysteine. The enzyme catalyses adenosine(37) in tRNA + 2 reduced [2Fe-2S]-[ferredoxin] + 2 S-adenosyl-L-methionine = 2-methyladenosine(37) in tRNA + 5'-deoxyadenosine + L-methionine + 2 oxidized [2Fe-2S]-[ferredoxin] + S-adenosyl-L-homocysteine. Functionally, specifically methylates position 2 of adenine 2503 in 23S rRNA and position 2 of adenine 37 in tRNAs. This chain is Probable dual-specificity RNA methyltransferase RlmN, found in Synechocystis sp. (strain ATCC 27184 / PCC 6803 / Kazusa).